A 424-amino-acid chain; its full sequence is Synaptotagmin-1 (424 aa).

Topologically, residues 1–60 are vesicular; the sequence is MVSESHHEALAAPPATTVAAALPSNVTEPAAPGGGGGKEDAFSNLKKKFMNELNKIPLPP. Residue Asn-25 is glycosylated (N-linked (GlcNAc...) asparagine). Residues 61-82 traverse the membrane as a helical segment; that stretch reads WALIAIAIVAVLLILTCCFCLC. 5 S-palmitoyl cysteine lipidation sites follow: Cys-77, Cys-78, Cys-80, Cys-82, and Cys-85. Over 83–424 the chain is Cytoplasmic; the sequence is KKCLFKKKNK…EVDAMLAVKK (342 aa). A disordered region spans residues 117 to 142; the sequence is KDQALKDDDAETGLTDGEEKEEPKEV. Acidic residues predominate over residues 124 to 136; that stretch reads DDAETGLTDGEEK. Residues 138–384 are phospholipid binding; it reads EPKEVEKLGK…AIGKVFVGYN (247 aa). C2 domains are found at residues 144–263 and 275–408; these read KLGK…EEWR and KLGD…AQWH. Residues Leu-174, Asp-175, Asp-181, Asp-233, Phe-234, Asp-235, Ser-238, Lys-239, Asp-241, Asp-306, Asp-312, Asp-366, Asp-368, and Asp-374 each contribute to the Ca(2+) site.

The protein belongs to the synaptotagmin family. In terms of assembly, homotetramer. The cofactor is Ca(2+).

It localises to the cytoplasmic vesicle. The protein localises to the secretory vesicle membrane. It is found in the secretory vesicle. The protein resides in the synaptic vesicle membrane. Its subcellular location is the chromaffin granule membrane. It localises to the cytoplasm. Functionally, calcium sensor that participates in triggering neurotransmitter release at the synapse. May have a regulatory role in the membrane interactions during trafficking of synaptic vesicles at the active zone of the synapse. It binds acidic phospholipids with a specificity that requires the presence of both an acidic head group and a diacyl backbone. May play a role in dendrite formation by melanocytes. The sequence is that of Synaptotagmin-1 (SYT1) from Gallus gallus (Chicken).